The primary structure comprises 312 residues: Nicotinamide adenine dinucleotide transporter 1, chloroplastic (312 aa).

Solcar repeat units follow at residues 11–103 (KNVL…LKSF), 111–199 (LSVG…IKVY), and 211–299 (LNAR…VHRF). 6 consecutive transmembrane segments (helical) span residues 17–37 (AAAG…LDVI), 78–98 (GLSP…TMYD), 117–137 (VLAA…LWVV), 171–191 (GLYS…IQFP), 216–232 (VAVA…TLTY), and 271–293 (FYRG…FTSF).

It belongs to the mitochondrial carrier (TC 2.A.29) family. In terms of tissue distribution, highly expressed in young leaf mesophyll cells, root tips and at the branches of adventitious roots. Low expression in all flower tissues and not detected in siliques and seeds.

It localises to the plastid. The protein resides in the chloroplast membrane. Its activity is regulated as follows. Inhibited by pyridoxal 5'-phosphate, bathophenanthroline, tannic acid, mersalyl, mercuric chloride, p-hydroxymercuribenzoate, p-hydroxymercuribenzoate sulfonate, bromocresol purple and N-ethylmaleimide. Mediates the NAD(+) import into chloroplast. Favors the NAD(+)(in)/ADP or AMP(out) antiport exchange, but is also able to catalyze a low unidirectional transport (uniport) of NAD(+). Transports NAD(+), nicotinic acid adenine dinucleotide, nicotinamide mononucleotide, nicotinic acid mononucleotide, FAD, FMN, TTP, TDP, TMP, UTP, UDP, UMP, CTP, CDP, CMP, GTP, GDP, GMP, 3'-AMP, ATP, ADP, and AMP, has low transport activity with cAMP, pyrophosphate, NADH and alpha-NAD(+), and has no activity with NADP(+), NADPH, nicotinamide, nicotinic acid, adenosine, thiamine mono- or diphosphate, inorganic phosphate, CoA, folate, NaCl, malate, malonate, citrate, fumarate, aspartate, glutamate, S-adenosylmethionine, lysine, arginine, and ornithine. This chain is Nicotinamide adenine dinucleotide transporter 1, chloroplastic (NDT1), found in Arabidopsis thaliana (Mouse-ear cress).